Consider the following 120-residue polypeptide: NAD(P)H-quinone oxidoreductase subunit 3, chloroplastic (120 aa).

The next 3 membrane-spanning stretches (helical) occupy residues 9–29, 64–84, and 88–108; these read IFWA…LISG, MFAL…PWAM, and VLGV…IVGL.

The protein belongs to the complex I subunit 3 family. In terms of assembly, NDH is composed of at least 16 different subunits, 5 of which are encoded in the nucleus.

The protein localises to the plastid. The protein resides in the chloroplast thylakoid membrane. It carries out the reaction a plastoquinone + NADH + (n+1) H(+)(in) = a plastoquinol + NAD(+) + n H(+)(out). The enzyme catalyses a plastoquinone + NADPH + (n+1) H(+)(in) = a plastoquinol + NADP(+) + n H(+)(out). Its function is as follows. NDH shuttles electrons from NAD(P)H:plastoquinone, via FMN and iron-sulfur (Fe-S) centers, to quinones in the photosynthetic chain and possibly in a chloroplast respiratory chain. The immediate electron acceptor for the enzyme in this species is believed to be plastoquinone. Couples the redox reaction to proton translocation, and thus conserves the redox energy in a proton gradient. The polypeptide is NAD(P)H-quinone oxidoreductase subunit 3, chloroplastic (Lupinus luteus (European yellow lupine)).